Here is a 418-residue protein sequence, read N- to C-terminus: Tyrosine--tRNA ligase (418 aa).

Tyrosine 34 is an L-tyrosine binding site. Residues 39–48 (PTADSLHLGH) carry the 'HIGH' region motif. Positions 169 and 173 each coordinate L-tyrosine. The short motif at 229–233 (KFGKS) is the 'KMSKS' region element. Position 232 (lysine 232) interacts with ATP. The S4 RNA-binding domain occupies 352–418 (LNLVDMLVTA…GKKKYAVLTY (67 aa)).

Belongs to the class-I aminoacyl-tRNA synthetase family. TyrS type 1 subfamily. In terms of assembly, homodimer.

The protein localises to the cytoplasm. It catalyses the reaction tRNA(Tyr) + L-tyrosine + ATP = L-tyrosyl-tRNA(Tyr) + AMP + diphosphate + H(+). Functionally, catalyzes the attachment of tyrosine to tRNA(Tyr) in a two-step reaction: tyrosine is first activated by ATP to form Tyr-AMP and then transferred to the acceptor end of tRNA(Tyr). The sequence is that of Tyrosine--tRNA ligase from Streptococcus pyogenes serotype M12 (strain MGAS2096).